The sequence spans 843 residues: Complement component C7 (843 aa).

The N-terminal stretch at 1-22 (MKAMSLVFLVGLIGEFQVFSSA) is a signal peptide. The TSP type-1 1 domain maps to 27-80 (NCQWDSYAPWSECNGCTKTQTRRRPVAVYGQYGGHPCVGSTFETQSCEPTRGCP). 7 disulfide bridges follow: Cys28–Cys63, Cys39–Cys73, Cys42–Cys79, Cys85–Cys96, Cys91–Cys109, Cys103–Cys119, and Cys128–Cys165. A glycan (C-linked (Man) tryptophan) is linked at Trp36. The region spanning 83-121 (EGCGERFRCFSGQCISKSLVCNGDSDCEEDSADEDRCED) is the LDL-receptor class A domain. The tract at residues 105–142 (GDSDCEEDSADEDRCEDSESRPSCDLSKPPPNIELTGN) is disordered. Positions 107 to 120 (SDCEEDSADEDRCE) are enriched in acidic residues. The MACPF domain occupies 124–456 (SRPSCDLSKP…EYLDEFDSCH (333 aa)). Asn202 carries an N-linked (GlcNAc...) asparagine glycan. 21 disulfides stabilise this stretch: Cys337–Cys353, Cys433–Cys560, Cys455–Cys505, Cys457–Cys473, Cys460–Cys475, Cys477–Cys486, Cys512–Cys545, Cys523–Cys535, Cys571–Cys613, Cys599–Cys626, Cys631–Cys673, Cys659–Cys688, Cys702–Cys713, Cys715–Cys750, Cys721–Cys743, Cys728–Cys763, Cys773–Cys782, Cys776–Cys789, Cys791–Cys825, Cys797–Cys818, and Cys805–Cys838. The 31-residue stretch at 457-487 (CQPCQNGGMASVEGTQCQCHCKPNTFGVACE) folds into the EGF-like domain. The 50-residue stretch at 500 to 549 (DGGWSCWSSWGPCAQGKKTRSRKCNNPPPSGGGKSCIGETSESRQCEDED) folds into the TSP type-1 2 domain. 3 C-linked (Man) tryptophan glycosylation sites follow: Trp503, Trp506, and Trp509. The segment at 516 to 539 (KKTRSRKCNNPPPSGGGKSCIGET) is disordered. CCP regions lie at residues 545 to 615 (CEDE…RCGE) and 616 to 693 (DLQW…RKEA). Sushi domains lie at 569–628 (EFCP…HCQK) and 629–690 (IACV…QCVR). Factor I module (FIM) regions lie at residues 695 to 770 (LAKK…GSAE) and 771 to 843 (KACG…PEAP). An N-linked (GlcNAc...) asparagine glycan is attached at Asn754.

The protein belongs to the complement C6/C7/C8/C9 family. Monomer or dimer; as a C5b-7 complex it can also form multimeric rosettes. Component of the membrane attack complex (MAC), composed of complement C5b, C6, C7, C8A, C8B, C8G and multiple copies of the pore-forming subunit C9. In terms of processing, C-, N- and O-glycosylated. O-glycosylated with core 1 or possibly core 8 glycans. Detected in plasma (at protein level). Bone marrow, heart, intestine, lung, spleen, kidney, liver and thymus.

The protein resides in the secreted. It is found in the target cell membrane. Membrane attack complex (MAC) assembly is inhibited by CD59, thereby protecting self-cells from damage during complement activation. MAC assembly is also inhibited by clusterin (CLU) chaperones that inhibit polymerization of C9. Its function is as follows. Component of the membrane attack complex (MAC), a multiprotein complex activated by the complement cascade, which inserts into a target cell membrane and forms a pore, leading to target cell membrane rupture and cell lysis. The MAC is initiated by proteolytic cleavage of C5 into complement C5b in response to the classical, alternative, lectin and GZMK complement pathways. The complement pathways consist in a cascade of proteins that leads to phagocytosis and breakdown of pathogens and signaling that strengthens the adaptive immune system. C7 serves as a membrane anchor. During MAC assembly, associates with C5b and C6 to form the C5b-7 complex, a key lipophilic precursor of the MAC complex, which associates with the outer leaflet and reduces the energy for membrane bending. The chain is Complement component C7 (C7) from Sus scrofa (Pig).